We begin with the raw amino-acid sequence, 498 residues long: Transcription factor bHLH78 (498 aa).

2 disordered regions span residues 1–24 (MDNELFMNTEFPPPPEMATHFEHQ) and 207–297 (LVSP…PPKD). The span at 233 to 246 (NPISTASPSPSFSK) shows a compositional bias: polar residues. Residues 259-270 (SSEEKGGKRRRE) are compositionally biased toward basic and acidic residues. A compositionally biased stretch (acidic residues) spans 271-281 (EEDDEEEEGEG). In terms of domain architecture, bHLH spans 307–357 (QATDSHSLAERVRREKIGERMKLLQDLVPGCNKVTGKALMLDEIINYVQSL).

Homodimer. Binds reversibly to CRY2 after blue light illumination. Expressed constitutively in roots, leaves, stems, and flowers.

It localises to the nucleus. Its function is as follows. Transcription factor that binds DNA to G box 5'-CACGTG-3' and to E-box 5'-CANNTG-3'. Binds to chromatin DNA of the FT gene and promotes its expression, and thus triggers flowering in response to blue light. The protein is Transcription factor bHLH78 (BHLH78) of Arabidopsis thaliana (Mouse-ear cress).